The sequence spans 192 residues: Adenine phosphoribosyltransferase 2 (192 aa).

Belongs to the purine/pyrimidine phosphoribosyltransferase family. As to quaternary structure, homodimer.

It is found in the cytoplasm. The enzyme catalyses AMP + diphosphate = 5-phospho-alpha-D-ribose 1-diphosphate + adenine. It participates in purine metabolism; AMP biosynthesis via salvage pathway; AMP from adenine: step 1/1. Catalyzes a salvage reaction resulting in the formation of AMP, that is energically less costly than de novo synthesis. May contribute to the recycling of adenine into adenylate nucleotides and the inactivation of cytokinins by phosphoribosylation. Possesses low activity toward adenine and cytokinins. This chain is Adenine phosphoribosyltransferase 2 (APT2), found in Arabidopsis thaliana (Mouse-ear cress).